Consider the following 594-residue polypeptide: Microtubule-associated protein VP8 (594 aa).

Its subcellular location is the virion. It is found in the host cytoplasm. It localises to the host cytoskeleton. Minor inner capsid component. Displays NTPase and RNA 5'-triphosphatase (RTPase) activities. May function as a cofactor of polymerase VP1. Associates with microtubules and plays a role in the formation, structural organization and morphology of viral inclusions, where the assembly of cores and the replication of viral RNA occur. This is Microtubule-associated protein VP8 (S8) from Saccharum officinarum (Sugarcane).